The primary structure comprises 935 residues: Coiled-coil domain-containing protein 191 (935 aa).

Coiled coils occupy residues 189-324 (RLTM…ENQQ), 366-438 (YTRS…ALLK), 554-589 (RHVF…AEAQ), and 660-740 (KAME…LEAI). Disordered stretches follow at residues 596–661 (SAVT…ILKA) and 678–715 (EKKK…RKRE).

The chain is Coiled-coil domain-containing protein 191 (CCDC191) from Macaca fascicularis (Crab-eating macaque).